Consider the following 67-residue polypeptide: MARWNVCSYCGKPFEPGTGKMFVRNDGRVLFFCSRKCERYYFMGRNPRKLKWTKAYQEARLQRGIRK.

Residues C7, C10, C33, and C37 each coordinate Zn(2+). Residues 7-37 (CSYCGKPFEPGTGKMFVRNDGRVLFFCSRKC) form a C4-type zinc finger.

This sequence belongs to the eukaryotic ribosomal protein eL24 family. As to quaternary structure, part of the 50S ribosomal subunit. Forms a cluster with proteins L3 and L14. It depends on Zn(2+) as a cofactor.

Its function is as follows. Binds to the 23S rRNA. The sequence is that of Large ribosomal subunit protein eL24 from Pyrococcus abyssi (strain GE5 / Orsay).